Consider the following 52-residue polypeptide: UPF0181 protein NTHI1697 (52 aa).

The protein belongs to the UPF0181 family.

This Haemophilus influenzae (strain 86-028NP) protein is UPF0181 protein NTHI1697.